Consider the following 149-residue polypeptide: Large ribosomal subunit protein bL9 (149 aa).

This sequence belongs to the bacterial ribosomal protein bL9 family.

Binds to the 23S rRNA. The sequence is that of Large ribosomal subunit protein bL9 from Actinobacillus pleuropneumoniae serotype 3 (strain JL03).